The following is a 418-amino-acid chain: UDP-N-acetylglucosamine 1-carboxyvinyltransferase (418 aa).

22–23 (KN) provides a ligand contact to phosphoenolpyruvate. Arginine 93 serves as a coordination point for UDP-N-acetyl-alpha-D-glucosamine. The active-site Proton donor is cysteine 117. 2-(S-cysteinyl)pyruvic acid O-phosphothioketal is present on cysteine 117. Residues aspartate 305 and valine 327 each coordinate UDP-N-acetyl-alpha-D-glucosamine.

It belongs to the EPSP synthase family. MurA subfamily.

Its subcellular location is the cytoplasm. It carries out the reaction phosphoenolpyruvate + UDP-N-acetyl-alpha-D-glucosamine = UDP-N-acetyl-3-O-(1-carboxyvinyl)-alpha-D-glucosamine + phosphate. It functions in the pathway cell wall biogenesis; peptidoglycan biosynthesis. Functionally, cell wall formation. Adds enolpyruvyl to UDP-N-acetylglucosamine. In Halorhodospira halophila (strain DSM 244 / SL1) (Ectothiorhodospira halophila (strain DSM 244 / SL1)), this protein is UDP-N-acetylglucosamine 1-carboxyvinyltransferase.